The primary structure comprises 275 residues: Ribosomal protein L11 methyltransferase (275 aa).

S-adenosyl-L-methionine is bound by residues Thr-123, Gly-146, Asp-167, and Asn-208.

It belongs to the methyltransferase superfamily. PrmA family.

It localises to the cytoplasm. The catalysed reaction is L-lysyl-[protein] + 3 S-adenosyl-L-methionine = N(6),N(6),N(6)-trimethyl-L-lysyl-[protein] + 3 S-adenosyl-L-homocysteine + 3 H(+). Its function is as follows. Methylates ribosomal protein L11. The chain is Ribosomal protein L11 methyltransferase from Campylobacter fetus subsp. fetus (strain 82-40).